The sequence spans 436 residues: Glutamyl-tRNA reductase (436 aa).

Substrate contacts are provided by residues 49 to 52, S118, 123 to 125, and Q129; these read TCNR and EPQ. The active-site Nucleophile is C50. Residue 203-208 coordinates NADP(+); it reads GAGETI.

Belongs to the glutamyl-tRNA reductase family. Homodimer.

It carries out the reaction (S)-4-amino-5-oxopentanoate + tRNA(Glu) + NADP(+) = L-glutamyl-tRNA(Glu) + NADPH + H(+). Its pathway is porphyrin-containing compound metabolism; protoporphyrin-IX biosynthesis; 5-aminolevulinate from L-glutamyl-tRNA(Glu): step 1/2. Functionally, catalyzes the NADPH-dependent reduction of glutamyl-tRNA(Glu) to glutamate 1-semialdehyde (GSA). The polypeptide is Glutamyl-tRNA reductase (Actinobacillus pleuropneumoniae serotype 7 (strain AP76)).